A 266-amino-acid polypeptide reads, in one-letter code: Putative pyruvate, phosphate dikinase regulatory protein (266 aa).

147-154 lines the ADP pocket; the sequence is GLSRTSKT.

Belongs to the pyruvate, phosphate/water dikinase regulatory protein family. PDRP subfamily.

The catalysed reaction is N(tele)-phospho-L-histidyl/L-threonyl-[pyruvate, phosphate dikinase] + ADP = N(tele)-phospho-L-histidyl/O-phospho-L-threonyl-[pyruvate, phosphate dikinase] + AMP + H(+). It catalyses the reaction N(tele)-phospho-L-histidyl/O-phospho-L-threonyl-[pyruvate, phosphate dikinase] + phosphate + H(+) = N(tele)-phospho-L-histidyl/L-threonyl-[pyruvate, phosphate dikinase] + diphosphate. In terms of biological role, bifunctional serine/threonine kinase and phosphorylase involved in the regulation of the pyruvate, phosphate dikinase (PPDK) by catalyzing its phosphorylation/dephosphorylation. This chain is Putative pyruvate, phosphate dikinase regulatory protein, found in Clostridium perfringens (strain SM101 / Type A).